We begin with the raw amino-acid sequence, 503 residues long: TGF-beta receptor type-1 (503 aa).

The N-terminal stretch at 1-33 (MEAAVAAPRPRLLLLVLAAAAAAAAALLPGATA) is a signal peptide. Residues 34–126 (LQCFCHLCTK…SSPGLGPVEL (93 aa)) are Extracellular-facing. Intrachain disulfides connect Cys36-Cys54, Cys38-Cys41, Cys48-Cys71, Cys86-Cys100, and Cys101-Cys106. The N-linked (GlcNAc...) asparagine glycan is linked to Asn45. A helical transmembrane segment spans residues 127 to 147 (AAVIAGPVCFVCISLMLMVYI). At 148-503 (CHNRTVIHHR…QLSQQEGIKM (356 aa)) the chain is on the cytoplasmic side. Ser165 carries the post-translational modification Phosphoserine. Residues 175 to 204 (TTLKDLIYDMTTSGSGSGLPLLVQRTIART) enclose the GS domain. Phosphothreonine; by TGFBR2 is present on residues Thr185 and Thr186. Ser187, Ser189, and Ser191 each carry phosphoserine; by TGFBR2. Positions 193–194 (LP) match the FKBP1A-binding motif. In terms of domain architecture, Protein kinase spans 205 to 495 (IVLQESIGKG…LRIKKTLSQL (291 aa)). Residues 211-219 (IGKGRFGEV) and Lys232 contribute to the ATP site. Lys268 is covalently cross-linked (Glycyl lysine isopeptide (Lys-Gly) (interchain with G-Cter in ubiquitin)). Asp333 functions as the Proton acceptor in the catalytic mechanism. Lys391 is covalently cross-linked (Glycyl lysine isopeptide (Lys-Gly) (interchain with G-Cter in SUMO)).

This sequence belongs to the protein kinase superfamily. TKL Ser/Thr protein kinase family. TGFB receptor subfamily. As to quaternary structure, homodimer; in the endoplasmic reticulum but also at the cell membrane. Heterohexamer; TGFB1, TGFB2 and TGFB3 homodimeric ligands assemble a functional receptor composed of two TGFBR1 and TGFBR2 heterodimers to form a ligand-receptor heterohexamer. The respective affinity of TGBRB1 and TGFBR2 for the ligands may modulate the kinetics of assembly of the receptor and may explain the different biological activities of TGFB1, TGFB2 and TGFB3. Component of a complex composed of TSC22D1 (via N-terminus), TGFBR1 and TGFBR2; the interaction between TSC22D1 and TGFBR1 is inhibited by SMAD7 and promoted by TGFB1. Interacts with CD109; inhibits TGF-beta receptor activation in keratinocytes. Interacts with RBPMS. Interacts (unphosphorylated) with FKBP1A; prevents TGFBR1 phosphorylation by TGFBR2 and stabilizes it in the inactive conformation. Interacts with SMAD2, SMAD3 and ZFYVE9; ZFYVE9 recruits SMAD2 and SMAD3 to the TGF-beta receptor. Interacts with TRAF6 and MAP3K7; induces MAP3K7 activation by TRAF6. Interacts with PARD6A; involved in TGF-beta induced epithelial to mesenchymal transition. Interacts with NEDD4L. Interacts with SMAD7, SMURF1 and SMURF2; SMAD7 recruits NEDD4L, SMURF1 and SMURF2 to the TGF-beta receptor. Interacts with USP15 and VPS39. Interacts with SDCBP (via C-terminus). Interacts with CAV1 and this interaction is impaired in the presence of SDCBP. Interacts with APPL1; interaction is TGF beta dependent; mediates trafficking of the TGFBR1 from the endosomes to the nucleus via microtubules in a TRAF6-dependent manner. Interacts with GPR50; this interaction promotes the constitutive activation of SMAD signaling pathway. The cofactor is Mg(2+). Mn(2+) serves as cofactor. Post-translationally, phosphorylated at basal levels in the absence of ligand. Activated upon phosphorylation by TGFBR2, mainly in the GS domain. Phosphorylation in the GS domain abrogates FKBP1A-binding. In terms of processing, N-Glycosylated. Ubiquitinated; undergoes ubiquitination catalyzed by several E3 ubiquitin ligases including SMURF1, SMURF2 and NEDD4L2. Results in the proteasomal and/or lysosomal degradation of the receptor thereby negatively regulating its activity. Deubiquitinated by USP15, leading to stabilization of the protein and enhanced TGF-beta signal. Its ubiquitination and proteasome-mediated degradation is negatively regulated by SDCBP. Ubiquitinated by BFAR via'Lys-63'-linked ubiquitination at Lys-268, leading to TGF-beta signaling activation. As to expression, found in all tissues examined, most abundant in placenta and least abundant in brain and heart. Expressed in a variety of cancer cell lines.

It is found in the cell membrane. Its subcellular location is the cell junction. The protein localises to the tight junction. It localises to the cell surface. The protein resides in the membrane raft. The enzyme catalyses L-threonyl-[receptor-protein] + ATP = O-phospho-L-threonyl-[receptor-protein] + ADP + H(+). The catalysed reaction is L-seryl-[receptor-protein] + ATP = O-phospho-L-seryl-[receptor-protein] + ADP + H(+). Its activity is regulated as follows. Kept in an inactive conformation by FKBP1A preventing receptor activation in absence of ligand. CD109 is another inhibitor of the receptor. Transmembrane serine/threonine kinase forming with the TGF-beta type II serine/threonine kinase receptor, TGFBR2, the non-promiscuous receptor for the TGF-beta cytokines TGFB1, TGFB2 and TGFB3. Transduces the TGFB1, TGFB2 and TGFB3 signal from the cell surface to the cytoplasm and is thus regulating a plethora of physiological and pathological processes including cell cycle arrest in epithelial and hematopoietic cells, control of mesenchymal cell proliferation and differentiation, wound healing, extracellular matrix production, immunosuppression and carcinogenesis. The formation of the receptor complex composed of 2 TGFBR1 and 2 TGFBR2 molecules symmetrically bound to the cytokine dimer results in the phosphorylation and the activation of TGFBR1 by the constitutively active TGFBR2. Activated TGFBR1 phosphorylates SMAD2 which dissociates from the receptor and interacts with SMAD4. The SMAD2-SMAD4 complex is subsequently translocated to the nucleus where it modulates the transcription of the TGF-beta-regulated genes. This constitutes the canonical SMAD-dependent TGF-beta signaling cascade. Also involved in non-canonical, SMAD-independent TGF-beta signaling pathways. For instance, TGFBR1 induces TRAF6 autoubiquitination which in turn results in MAP3K7 ubiquitination and activation to trigger apoptosis. Also regulates epithelial to mesenchymal transition through a SMAD-independent signaling pathway through PARD6A phosphorylation and activation. The sequence is that of TGF-beta receptor type-1 (TGFBR1) from Homo sapiens (Human).